We begin with the raw amino-acid sequence, 292 residues long: Elongation factor Ts (292 aa).

The segment at 80-83 (TDFV) is involved in Mg(2+) ion dislocation from EF-Tu.

The protein belongs to the EF-Ts family.

The protein resides in the cytoplasm. Associates with the EF-Tu.GDP complex and induces the exchange of GDP to GTP. It remains bound to the aminoacyl-tRNA.EF-Tu.GTP complex up to the GTP hydrolysis stage on the ribosome. The chain is Elongation factor Ts from Cupriavidus necator (strain ATCC 17699 / DSM 428 / KCTC 22496 / NCIMB 10442 / H16 / Stanier 337) (Ralstonia eutropha).